The chain runs to 154 residues: 6,7-dimethyl-8-ribityllumazine synthase (154 aa).

5-amino-6-(D-ribitylamino)uracil-binding positions include Phe22, 56–58, and 80–82; these read AFE and AVI. 85–86 contributes to the (2S)-2-hydroxy-3-oxobutyl phosphate binding site; sequence AT. The active-site Proton donor is His88. Phe113 lines the 5-amino-6-(D-ribitylamino)uracil pocket. Residue Arg127 coordinates (2S)-2-hydroxy-3-oxobutyl phosphate.

The protein belongs to the DMRL synthase family. Forms an icosahedral capsid composed of 60 subunits, arranged as a dodecamer of pentamers.

The catalysed reaction is (2S)-2-hydroxy-3-oxobutyl phosphate + 5-amino-6-(D-ribitylamino)uracil = 6,7-dimethyl-8-(1-D-ribityl)lumazine + phosphate + 2 H2O + H(+). The protein operates within cofactor biosynthesis; riboflavin biosynthesis; riboflavin from 2-hydroxy-3-oxobutyl phosphate and 5-amino-6-(D-ribitylamino)uracil: step 1/2. In terms of biological role, catalyzes the formation of 6,7-dimethyl-8-ribityllumazine by condensation of 5-amino-6-(D-ribitylamino)uracil with 3,4-dihydroxy-2-butanone 4-phosphate. This is the penultimate step in the biosynthesis of riboflavin. This is 6,7-dimethyl-8-ribityllumazine synthase from Anoxybacillus flavithermus (strain DSM 21510 / WK1).